Reading from the N-terminus, the 322-residue chain is MKTTFLEFEQPIAELEAKIEELRFVQDDSAVDISEEISRLAAKSQQLTKDLYATLSPWQVAQIARHPQRPYTLDYVREIFTDFHELHGDRTFADDLSIVGGLARFNGQPCMVIGHQKGRDTKERALRNFGMSKPEGYRKAKRLMELADKFGLPIFTFVDTPGAFPGIEAEERGQSEAIGHNLFVMAGLKVPLIATIIGEGGSGGALAIAVGDSVIMLQFATYAVISPEGCASILWKTAEKAPEAAEALGLTAHRLKALGLIDKIVNEPLGGAHRDPKAMATMLKRALAESLRQFQGMKTSELQARRHERLMAYGKFKETGSN.

Residues 39-293 (RLAAKSQQLT…KRALAESLRQ (255 aa)) form the CoA carboxyltransferase C-terminal domain.

Belongs to the AccA family. Acetyl-CoA carboxylase is a heterohexamer composed of biotin carboxyl carrier protein (AccB), biotin carboxylase (AccC) and two subunits each of ACCase subunit alpha (AccA) and ACCase subunit beta (AccD).

The protein localises to the cytoplasm. It carries out the reaction N(6)-carboxybiotinyl-L-lysyl-[protein] + acetyl-CoA = N(6)-biotinyl-L-lysyl-[protein] + malonyl-CoA. It participates in lipid metabolism; malonyl-CoA biosynthesis; malonyl-CoA from acetyl-CoA: step 1/1. In terms of biological role, component of the acetyl coenzyme A carboxylase (ACC) complex. First, biotin carboxylase catalyzes the carboxylation of biotin on its carrier protein (BCCP) and then the CO(2) group is transferred by the carboxyltransferase to acetyl-CoA to form malonyl-CoA. This Ralstonia nicotianae (strain ATCC BAA-1114 / GMI1000) (Ralstonia solanacearum) protein is Acetyl-coenzyme A carboxylase carboxyl transferase subunit alpha.